Consider the following 524-residue polypeptide: Ribonuclease Y (524 aa).

Residues 2–22 form a helical membrane-spanning segment; the sequence is GIVINLFLIIAASIVFFVVGF. Positions 214-299 constitute a KH domain; it reads ALSVVHIQSD…KAYQDAKKEI (86 aa). The HD domain maps to 340 to 432; the sequence is LLQHSREVAM…VDAANIVSLS (93 aa).

This sequence belongs to the RNase Y family.

Its subcellular location is the cell membrane. Functionally, endoribonuclease that initiates mRNA decay. This is Ribonuclease Y from Chlorobaculum tepidum (strain ATCC 49652 / DSM 12025 / NBRC 103806 / TLS) (Chlorobium tepidum).